The chain runs to 69 residues: Large ribosomal subunit protein uL29 (69 aa).

The protein belongs to the universal ribosomal protein uL29 family.

This is Large ribosomal subunit protein uL29 from Treponema denticola (strain ATCC 35405 / DSM 14222 / CIP 103919 / JCM 8153 / KCTC 15104).